We begin with the raw amino-acid sequence, 196 residues long: Putative 3-methyladenine DNA glycosylase (196 aa).

The protein belongs to the DNA glycosylase MPG family.

The protein is Putative 3-methyladenine DNA glycosylase of Chlorobium luteolum (strain DSM 273 / BCRC 81028 / 2530) (Pelodictyon luteolum).